The primary structure comprises 328 residues: Gonadotropin-releasing hormone receptor (328 aa).

Residues 1–38 are Extracellular-facing; sequence MQDDTSSEQNPTHCSAINSSVPLVQGALPTLTLSGKIR. Asn18 carries an N-linked (GlcNAc...) asparagine glycan. Residues 39-59 traverse the membrane as a helical segment; the sequence is VTVTFFLFLVSTTLNASFLLK. Residues 60–84 lie on the Cytoplasmic side of the membrane; it reads LQKWTQKKEKGKKLSRMKVLLKHLT. The chain crosses the membrane as a helical span at residues 85-105; it reads LANLLETLIVMPLDGMWNITV. Over 106–115 the chain is Extracellular; the sequence is QWYAGELLCK. Cys114 and Cys196 are joined by a disulfide. A helical membrane pass occupies residues 116 to 136; it reads ILSYLKLFSMYAPAFMMVVIS. Topologically, residues 137–160 are cytoplasmic; that stretch reads LDRSMAITRPLPVQSNRKLEQSMT. The chain crosses the membrane as a helical span at residues 161 to 181; the sequence is GLAWGLSSVLAGPQLYIFKMI. Residues 182-208 lie on the Extracellular side of the membrane; that stretch reads HLENGPGQTEVFSQCVTHCSFPQWWHQ. A helical membrane pass occupies residues 209–229; it reads AFYNFFTFICLFIIPLLIMLI. At 230-271 the chain is on the cytoplasmic side; the sequence is CNAKIIFTLTQVLQQDSNKLQLNQSKNNIPRARLRTLKMTVA. A helical transmembrane segment spans residues 272-292; it reads FAASFIVCWTPYYVLGLWYWF. At 293-306 the chain is on the extracellular side; it reads DPGMLHRMSEPVNH. A helical membrane pass occupies residues 307 to 327; the sequence is FFFLFAFLNPCFDPLIYGYFS. A topological domain (cytoplasmic) is located at residue Leu328.

It belongs to the G-protein coupled receptor 1 family.

The protein resides in the cell membrane. Its function is as follows. Receptor for gonadotropin releasing hormone (GnRH) that mediates the action of GnRH to stimulate the secretion of the gonadotropic hormones luteinizing hormone (LH) and follicle-stimulating hormone (FSH). This receptor mediates its action by association with G-proteins that activate a phosphatidylinositol-calcium second messenger system. The sequence is that of Gonadotropin-releasing hormone receptor (GNRHR) from Cavia porcellus (Guinea pig).